Reading from the N-terminus, the 403-residue chain is Tyrosine--tRNA ligase (403 aa).

Residues 45-54 (PTAPDLHLGH) carry the 'HIGH' region motif. The 'KMSKS' region motif lies at 229–233 (KMSKS). Lysine 232 lines the ATP pocket. In terms of domain architecture, S4 RNA-binding spans 341–402 (VLLGRLLAEA…GKRRFARIVF (62 aa)).

The protein belongs to the class-I aminoacyl-tRNA synthetase family. TyrS type 2 subfamily. Homodimer.

It is found in the cytoplasm. The enzyme catalyses tRNA(Tyr) + L-tyrosine + ATP = L-tyrosyl-tRNA(Tyr) + AMP + diphosphate + H(+). In terms of biological role, catalyzes the attachment of tyrosine to tRNA(Tyr) in a two-step reaction: tyrosine is first activated by ATP to form Tyr-AMP and then transferred to the acceptor end of tRNA(Tyr). The chain is Tyrosine--tRNA ligase from Geobacter metallireducens (strain ATCC 53774 / DSM 7210 / GS-15).